A 635-amino-acid chain; its full sequence is Chaperone protein HtpG (635 aa).

Positions 1–343 are a; substrate-binding; it reads MSVETQKETL…SNDLSLNVSR (343 aa). The segment at 344-560 is b; sequence EILQKDPIID…EQDMGLQMRQ (217 aa). The segment at 561–635 is c; it reads ILEASGQKVP…LNKLLVELSV (75 aa).

The protein belongs to the heat shock protein 90 family. Homodimer.

Its subcellular location is the cytoplasm. Its function is as follows. Molecular chaperone. Has ATPase activity. In Pseudomonas syringae pv. tomato (strain ATCC BAA-871 / DC3000), this protein is Chaperone protein HtpG.